The sequence spans 545 residues: Chaperonin GroEL (545 aa).

ATP is bound by residues 29-32 (TLGP), Lys-50, 86-90 (DGTTT), Gly-413, and Asp-495.

The protein belongs to the chaperonin (HSP60) family. In terms of assembly, forms a cylinder of 14 subunits composed of two heptameric rings stacked back-to-back. Interacts with the co-chaperonin GroES.

It localises to the cytoplasm. It catalyses the reaction ATP + H2O + a folded polypeptide = ADP + phosphate + an unfolded polypeptide.. Together with its co-chaperonin GroES, plays an essential role in assisting protein folding. The GroEL-GroES system forms a nano-cage that allows encapsulation of the non-native substrate proteins and provides a physical environment optimized to promote and accelerate protein folding. In Borrelia garinii subsp. bavariensis (strain ATCC BAA-2496 / DSM 23469 / PBi) (Borreliella bavariensis), this protein is Chaperonin GroEL.